Consider the following 591-residue polypeptide: Mono(ADP-ribosyl)transferase SpvB (591 aa).

The TR mART core domain maps to 373–576 (PMMGGNSSRP…LRLSDDATAD (204 aa)). Residues arginine 471, serine 501, and glutamate 538 contribute to the active site.

This sequence belongs to the SpvB family.

The protein resides in the secreted. It carries out the reaction L-arginyl-[protein] + NAD(+) = N(omega)-(ADP-D-ribosyl)-L-arginyl-[protein] + nicotinamide + H(+). Its function is as follows. Mono-ADP-ribosylates eukaryotic muscle and non-muscle actin on 'Arg-177'. ADP-ribosylation prevents the polymerization of G-actin to F-actin, causing actin filament depolymerization, destruction of the cytoskeleton and cytotoxicity. Does not possess NAD(+)-glycohydrolase activity, unlike most mART enzymes. In Salmonella typhimurium (strain 14028s / SGSC 2262), this protein is Mono(ADP-ribosyl)transferase SpvB (spvB).